Consider the following 689-residue polypeptide: Transmembrane protein 214 (689 aa).

Disordered regions lie at residues 1 to 37 (MATK…NRRA) and 70 to 107 (RQNK…KQGR). Alanine 2 is subject to N-acetylalanine. Residues 20-31 (PGVGAGAGGRGG) are compositionally biased toward gly residues. Asparagine 269 and asparagine 307 each carry an N-linked (GlcNAc...) asparagine glycan. The next 2 membrane-spanning stretches (helical) occupy residues 480 to 500 (LPWT…LCHD) and 616 to 636 (LPLL…LEAL).

Belongs to the TMEM214 family. In terms of assembly, constitutively interacts with CASP4; required for the localization of procaspase 4 to the ER.

The protein localises to the endoplasmic reticulum membrane. Functionally, critical mediator, in cooperation with CASP4, of endoplasmic reticulum-stress induced apoptosis. Required or the activation of CASP4 following endoplasmic reticulum stress. The protein is Transmembrane protein 214 (TMEM214) of Homo sapiens (Human).